A 122-amino-acid chain; its full sequence is Large ribosomal subunit protein uL14c (122 aa).

This sequence belongs to the universal ribosomal protein uL14 family. In terms of assembly, part of the 50S ribosomal subunit.

It localises to the plastid. It is found in the chloroplast. Binds to 23S rRNA. The chain is Large ribosomal subunit protein uL14c from Lepidium virginicum (Virginia pepperweed).